Consider the following 333-residue polypeptide: UDP-3-O-acylglucosamine N-acyltransferase 2 (333 aa).

Catalysis depends on H243, which acts as the Proton acceptor.

The protein belongs to the transferase hexapeptide repeat family. LpxD subfamily. Homotrimer.

The enzyme catalyses a UDP-3-O-[(3R)-3-hydroxyacyl]-alpha-D-glucosamine + a (3R)-hydroxyacyl-[ACP] = a UDP-2-N,3-O-bis[(3R)-3-hydroxyacyl]-alpha-D-glucosamine + holo-[ACP] + H(+). Its pathway is bacterial outer membrane biogenesis; LPS lipid A biosynthesis. In terms of biological role, catalyzes the N-acylation of UDP-3-O-acylglucosamine using 3-hydroxyacyl-ACP as the acyl donor. Is involved in the biosynthesis of lipid A, a phosphorylated glycolipid that anchors the lipopolysaccharide to the outer membrane of the cell. The protein is UDP-3-O-acylglucosamine N-acyltransferase 2 of Koribacter versatilis (strain Ellin345).